We begin with the raw amino-acid sequence, 394 residues long: Elongation factor Tu (394 aa).

Residues 10–204 form the tr-type G domain; sequence KPHVNVGTIG…YLDSYIPEPE (195 aa). The segment at 19 to 26 is G1; it reads GHVDHGKT. Position 19–26 (19–26) interacts with GTP; the sequence is GHVDHGKT. T26 is a binding site for Mg(2+). The interval 60 to 64 is G2; it reads GITIN. Residues 81–84 are G3; sequence DCPG. GTP contacts are provided by residues 81–85 and 136–139; these read DCPGH and NKCD. Residues 136 to 139 are G4; the sequence is NKCD. Residues 174-176 form a G5 region; sequence SAL.

The protein belongs to the TRAFAC class translation factor GTPase superfamily. Classic translation factor GTPase family. EF-Tu/EF-1A subfamily. In terms of assembly, monomer.

The protein resides in the cytoplasm. The catalysed reaction is GTP + H2O = GDP + phosphate + H(+). Functionally, GTP hydrolase that promotes the GTP-dependent binding of aminoacyl-tRNA to the A-site of ribosomes during protein biosynthesis. In Pectobacterium atrosepticum (strain SCRI 1043 / ATCC BAA-672) (Erwinia carotovora subsp. atroseptica), this protein is Elongation factor Tu.